Consider the following 153-residue polypeptide: Agglutinin (153 aa).

Beta-D-galactosyl-(1-&gt;3)-N-acetyl-D-galactosamine is bound by residues asparagine 22–glutamate 25 and asparagine 46. The Ricin B-type lectin domain maps to glycine 58–lysine 153.

As to quaternary structure, homodimer.

Its function is as follows. Lectin that primarily recognizes glycans with a non-reducing terminal N-acetylgalactosamine (GalNAc), with a preference for the alpha- over the beta-anomer. Can also bind non-reducing terminal galactose (Gal) residues but with a lower affinity. Strongly interacts with glycolipid type glycans with terminal non-reducing Gal or GalNAc but fails to bind sialylated or fucosylated forms of the same glycans. Strongly interacts with galactosylated N-glycans, displaying highest affinity for alpha-1-3 branched mono-antennary N-glycans but also binding to multi-antennary glycans. The sequence is that of Agglutinin from Sclerotinia sclerotiorum (strain ATCC 18683 / 1980 / Ss-1) (White mold).